A 453-amino-acid chain; its full sequence is Bifunctional protein GlmU (453 aa).

A pyrophosphorylase region spans residues Met1–Lys225. Residues Leu6–Gly9, Lys20, Gln71, Gly76–Thr77, Tyr98–Asp100, Gly135, Glu150, Asn165, and Asn223 contribute to the UDP-N-acetyl-alpha-D-glucosamine site. A Mg(2+)-binding site is contributed by Asp100. Asn223 is a binding site for Mg(2+). The linker stretch occupies residues Gln226–Ala246. Residues Gly247–Ser453 form an N-acetyltransferase region. UDP-N-acetyl-alpha-D-glucosamine contacts are provided by Arg329 and Lys347. Residue His359 is the Proton acceptor of the active site. 2 residues coordinate UDP-N-acetyl-alpha-D-glucosamine: Tyr362 and Asn373. Acetyl-CoA is bound by residues Ala376, Asn382–Tyr383, Ser401, and Ala419.

It in the N-terminal section; belongs to the N-acetylglucosamine-1-phosphate uridyltransferase family. In the C-terminal section; belongs to the transferase hexapeptide repeat family. Homotrimer. Requires Mg(2+) as cofactor.

The protein resides in the cytoplasm. It carries out the reaction alpha-D-glucosamine 1-phosphate + acetyl-CoA = N-acetyl-alpha-D-glucosamine 1-phosphate + CoA + H(+). It catalyses the reaction N-acetyl-alpha-D-glucosamine 1-phosphate + UTP + H(+) = UDP-N-acetyl-alpha-D-glucosamine + diphosphate. The protein operates within nucleotide-sugar biosynthesis; UDP-N-acetyl-alpha-D-glucosamine biosynthesis; N-acetyl-alpha-D-glucosamine 1-phosphate from alpha-D-glucosamine 6-phosphate (route II): step 2/2. It participates in nucleotide-sugar biosynthesis; UDP-N-acetyl-alpha-D-glucosamine biosynthesis; UDP-N-acetyl-alpha-D-glucosamine from N-acetyl-alpha-D-glucosamine 1-phosphate: step 1/1. It functions in the pathway bacterial outer membrane biogenesis; LPS lipid A biosynthesis. Catalyzes the last two sequential reactions in the de novo biosynthetic pathway for UDP-N-acetylglucosamine (UDP-GlcNAc). The C-terminal domain catalyzes the transfer of acetyl group from acetyl coenzyme A to glucosamine-1-phosphate (GlcN-1-P) to produce N-acetylglucosamine-1-phosphate (GlcNAc-1-P), which is converted into UDP-GlcNAc by the transfer of uridine 5-monophosphate (from uridine 5-triphosphate), a reaction catalyzed by the N-terminal domain. This is Bifunctional protein GlmU from Paraburkholderia phymatum (strain DSM 17167 / CIP 108236 / LMG 21445 / STM815) (Burkholderia phymatum).